The primary structure comprises 502 residues: Maturase K (502 aa).

The protein belongs to the intron maturase 2 family. MatK subfamily.

It is found in the plastid. The protein resides in the chloroplast. In terms of biological role, usually encoded in the trnK tRNA gene intron. Probably assists in splicing its own and other chloroplast group II introns. This Tilia americana (American basswood) protein is Maturase K.